A 785-amino-acid chain; its full sequence is Phenylalanine--tRNA ligase beta subunit (785 aa).

One can recognise a tRNA-binding domain in the interval 39 to 150; sequence RTWAAGVVVG…ASLPLGLDVG (112 aa). Residues 400 to 476 enclose the B5 domain; it reads RENRVVSLRP…RVVGYDRFAP (77 aa). Positions 454, 460, 463, and 464 each coordinate Mg(2+). Residues 692-784 form the FDX-ACB domain; the sequence is SPFPPAARDL…LAERYSVDLR (93 aa).

This sequence belongs to the phenylalanyl-tRNA synthetase beta subunit family. Type 1 subfamily. Tetramer of two alpha and two beta subunits. It depends on Mg(2+) as a cofactor.

It is found in the cytoplasm. It carries out the reaction tRNA(Phe) + L-phenylalanine + ATP = L-phenylalanyl-tRNA(Phe) + AMP + diphosphate + H(+). This Gloeobacter violaceus (strain ATCC 29082 / PCC 7421) protein is Phenylalanine--tRNA ligase beta subunit.